The following is a 481-amino-acid chain: Glutamyl-tRNA(Gln) amidotransferase subunit A (481 aa).

Active-site charge relay system residues include K76 and S151. S175 (acyl-ester intermediate) is an active-site residue.

This sequence belongs to the amidase family. GatA subfamily. Heterotrimer of A, B and C subunits.

The catalysed reaction is L-glutamyl-tRNA(Gln) + L-glutamine + ATP + H2O = L-glutaminyl-tRNA(Gln) + L-glutamate + ADP + phosphate + H(+). In terms of biological role, allows the formation of correctly charged Gln-tRNA(Gln) through the transamidation of misacylated Glu-tRNA(Gln) in organisms which lack glutaminyl-tRNA synthetase. The reaction takes place in the presence of glutamine and ATP through an activated gamma-phospho-Glu-tRNA(Gln). This chain is Glutamyl-tRNA(Gln) amidotransferase subunit A, found in Neisseria meningitidis serogroup A / serotype 4A (strain DSM 15465 / Z2491).